The sequence spans 155 residues: Small ribosomal subunit protein uS7 (155 aa).

The protein belongs to the universal ribosomal protein uS7 family. In terms of assembly, part of the 30S ribosomal subunit. Contacts proteins S9 and S11.

In terms of biological role, one of the primary rRNA binding proteins, it binds directly to 16S rRNA where it nucleates assembly of the head domain of the 30S subunit. Is located at the subunit interface close to the decoding center, probably blocks exit of the E-site tRNA. The protein is Small ribosomal subunit protein uS7 of Xylella fastidiosa (strain M23).